Consider the following 597-residue polypeptide: (E)-sabinene hydrate synthase, chloroplastic (597 aa).

Residues 1–47 constitute a chloroplast transit peptide; the sequence is MSTISINHVGILRNPLQCKNKRTSINKPWSLSLPRSSPASRLVKPCR. 2 residues coordinate Mn(2+): Asp353 and Asp357. A DDXXD motif motif is present at residues 353–357; the sequence is DDVYD. Homodimerization stretches follow at residues 359 to 365 and 431 to 468; these read YGTLDEL and EAGW…VSLP. 2 residues coordinate Mn(2+): Asp495 and Glu503.

The protein belongs to the terpene synthase family. Homodimer. Mn(2+) serves as cofactor. It depends on Mg(2+) as a cofactor.

It localises to the plastid. The protein resides in the chloroplast. It carries out the reaction (2E)-geranyl diphosphate + H2O = sabinene hydrate + diphosphate. Its pathway is secondary metabolite biosynthesis; terpenoid biosynthesis. In terms of biological role, involved in the biosynthesis of phenolic monoterpenes natural products. Monoterpene synthase which catalyzes the conversion of geranyl diphosphate (GPP) to sabinene hydrate, specifically (E)-sabinene hydrate, and the formation of minor amounts and traces of several other monoterpenes (e.g. mainly alpha-pinene, limonene and alpha-terpineol). The chain is (E)-sabinene hydrate synthase, chloroplastic from Thymus vulgaris (Thyme).